A 393-amino-acid chain; its full sequence is ATP phosphoribosyltransferase regulatory subunit (393 aa).

Belongs to the class-II aminoacyl-tRNA synthetase family. HisZ subfamily. Heteromultimer composed of HisG and HisZ subunits.

It localises to the cytoplasm. It functions in the pathway amino-acid biosynthesis; L-histidine biosynthesis; L-histidine from 5-phospho-alpha-D-ribose 1-diphosphate: step 1/9. In terms of biological role, required for the first step of histidine biosynthesis. May allow the feedback regulation of ATP phosphoribosyltransferase activity by histidine. The protein is ATP phosphoribosyltransferase regulatory subunit of Chromohalobacter salexigens (strain ATCC BAA-138 / DSM 3043 / CIP 106854 / NCIMB 13768 / 1H11).